The primary structure comprises 154 residues: Myoglobin (154 aa).

Residues glycine 2–lysine 148 form the Globin domain. Serine 4 is subject to Phosphoserine. Histidine 65 contributes to the nitrite binding site. Residue histidine 65 coordinates O2. Threonine 68 is subject to Phosphothreonine. Residue histidine 94 coordinates heme b.

The protein belongs to the globin family. Monomeric.

Its subcellular location is the cytoplasm. It localises to the sarcoplasm. The enzyme catalyses Fe(III)-heme b-[protein] + nitric oxide + H2O = Fe(II)-heme b-[protein] + nitrite + 2 H(+). It catalyses the reaction H2O2 + AH2 = A + 2 H2O. Monomeric heme protein which primary function is to store oxygen and facilitate its diffusion within muscle tissues. Reversibly binds oxygen through a pentacoordinated heme iron and enables its timely and efficient release as needed during periods of heightened demand. Depending on the oxidative conditions of tissues and cells, and in addition to its ability to bind oxygen, it also has a nitrite reductase activity whereby it regulates the production of bioactive nitric oxide. Under stress conditions, like hypoxia and anoxia, it also protects cells against reactive oxygen species thanks to its pseudoperoxidase activity. The chain is Myoglobin (MB) from Erythrocebus patas (Red guenon).